Here is a 162-residue protein sequence, read N- to C-terminus: NADH-quinone oxidoreductase subunit I (162 aa).

4Fe-4S ferredoxin-type domains are found at residues 53-83 (LRRYPNGEERCIACKLCEAVCPAMAITIESE) and 93-122 (TRYDIDLTKCIFCGFCEESCPVDSIVETHI). C63, C66, C69, C73, C102, C105, C108, and C112 together coordinate [4Fe-4S] cluster.

It belongs to the complex I 23 kDa subunit family. As to quaternary structure, NDH-1 is composed of 14 different subunits. Subunits NuoA, H, J, K, L, M, N constitute the membrane sector of the complex. It depends on [4Fe-4S] cluster as a cofactor.

Its subcellular location is the cell inner membrane. The catalysed reaction is a quinone + NADH + 5 H(+)(in) = a quinol + NAD(+) + 4 H(+)(out). Functionally, NDH-1 shuttles electrons from NADH, via FMN and iron-sulfur (Fe-S) centers, to quinones in the respiratory chain. The immediate electron acceptor for the enzyme in this species is believed to be ubiquinone. Couples the redox reaction to proton translocation (for every two electrons transferred, four hydrogen ions are translocated across the cytoplasmic membrane), and thus conserves the redox energy in a proton gradient. This is NADH-quinone oxidoreductase subunit I from Herminiimonas arsenicoxydans.